A 274-amino-acid polypeptide reads, in one-letter code: Long chain fatty acid elongase 5 (274 aa).

The Extracellular portion of the chain corresponds to 1–23 (MMDQILGTNFTYEGAKEVARGLE). A helical transmembrane segment spans residues 24-44 (GFSAKLAVGYIATIFGLKYYM). The Cytoplasmic segment spans residues 45 to 61 (KDRKAFDLSTPLNIWNG). Residues 62–82 (ILSTFSLLGFLFTFPTLLSVI) traverse the membrane as a helical segment. At 83–105 (RKDGFSHTYSHVSELYTDSTSGY) the chain is on the extracellular side. A helical transmembrane segment spans residues 106–126 (WIFLWVISKIPELLDTVFIVL). Residues 127–129 (RKR) lie on the Cytoplasmic side of the membrane. The helical transmembrane segment at 130–150 (PLIFMHWYHHALTGYYALVCY) threads the bilayer. The Extracellular portion of the chain corresponds to 151–156 (HEDAVH). The chain crosses the membrane as a helical span at residues 157 to 177 (MVWVVWMNYIIHAFMYGYYLL). Over 178 to 187 (KSLKVPIPPS) the chain is Cytoplasmic. The helical transmembrane segment at 188–208 (VAQAITTSQMVQFAVAIFAQV) threads the bilayer. The Extracellular portion of the chain corresponds to 209–227 (HVSYKHYVEGVEGLAYSFR). Residues 228–248 (GTAIGFFMLTTYFYLWIQFYK) form a helical membrane-spanning segment. Over 249-274 (EHYLKNGGKKYNLAKDQAKTQTKKAN) the chain is Cytoplasmic.

The protein belongs to the ELO family. In terms of tissue distribution, expressed in the gut and unidentified head cells.

It localises to the membrane. It catalyses the reaction 11-methyldodecanoyl-CoA + malonyl-CoA + H(+) = 3-oxoisopentadecanoyl-CoA + CO2 + CoA. It carries out the reaction isopentadecanoyl-CoA + malonyl-CoA + H(+) = 3-oxoisoheptadecanoyl-CoA + CO2 + CoA. It functions in the pathway lipid metabolism; fatty acid biosynthesis. In terms of biological role, catalyzes the first and rate-limiting reaction of the four reactions that constitute the long-chain fatty acids elongation cycle. Uses malonyl-CoA to add 2 carbons per cycle to the chain of long-chain fatty acids. Condensing enzyme required for the formation of isopentadecanoate (C15iso) and isoheptadecanoate (C17iso), both play critical roles in animal development and growth. The chain is Long chain fatty acid elongase 5 from Caenorhabditis elegans.